The primary structure comprises 385 residues: UPF0284 protein PMM0439 (385 aa).

The protein belongs to the UPF0284 family.

The sequence is that of UPF0284 protein PMM0439 from Prochlorococcus marinus subsp. pastoris (strain CCMP1986 / NIES-2087 / MED4).